Reading from the N-terminus, the 205-residue chain is Small ribosomal subunit protein uS4 (205 aa).

The 62-residue stretch at Ser95 to Ala156 folds into the S4 RNA-binding domain.

Belongs to the universal ribosomal protein uS4 family. Part of the 30S ribosomal subunit. Contacts protein S5. The interaction surface between S4 and S5 is involved in control of translational fidelity.

In terms of biological role, one of the primary rRNA binding proteins, it binds directly to 16S rRNA where it nucleates assembly of the body of the 30S subunit. With S5 and S12 plays an important role in translational accuracy. The polypeptide is Small ribosomal subunit protein uS4 (Mycoplasma pneumoniae (strain ATCC 29342 / M129 / Subtype 1) (Mycoplasmoides pneumoniae)).